Reading from the N-terminus, the 669-residue chain is Probable potassium transport system protein Kup (669 aa).

The next 12 membrane-spanning stretches (helical) occupy residues 47–67 (VLML…TSPL), 86–106 (VIGI…IKYM), 144–164 (TIIG…TPAI), 172–192 (GLTL…IFVM), 206–226 (IGVI…LLGI), 252–272 (GMAG…GEAL), 288–308 (WFFV…ALLL), 326–346 (ALLP…QALI), 378–398 (IYIP…VLTF), 404–424 (LAAA…ILAF), 435–455 (LLKS…FFGA), and 460–480 (IPHG…LMTT).

The protein belongs to the HAK/KUP transporter (TC 2.A.72) family.

The protein localises to the cell inner membrane. The enzyme catalyses K(+)(in) + H(+)(in) = K(+)(out) + H(+)(out). In terms of biological role, transport of potassium into the cell. Likely operates as a K(+):H(+) symporter. The polypeptide is Probable potassium transport system protein Kup (Bdellovibrio bacteriovorus (strain ATCC 15356 / DSM 50701 / NCIMB 9529 / HD100)).